A 430-amino-acid polypeptide reads, in one-letter code: tRNA(Ile)-lysidine synthase (430 aa).

Residue 27 to 32 (SGGSDS) coordinates ATP.

This sequence belongs to the tRNA(Ile)-lysidine synthase family.

Its subcellular location is the cytoplasm. The catalysed reaction is cytidine(34) in tRNA(Ile2) + L-lysine + ATP = lysidine(34) in tRNA(Ile2) + AMP + diphosphate + H(+). Functionally, ligates lysine onto the cytidine present at position 34 of the AUA codon-specific tRNA(Ile) that contains the anticodon CAU, in an ATP-dependent manner. Cytidine is converted to lysidine, thus changing the amino acid specificity of the tRNA from methionine to isoleucine. In Rickettsia bellii (strain RML369-C), this protein is tRNA(Ile)-lysidine synthase.